Reading from the N-terminus, the 295-residue chain is Ribosomal protein L11 methyltransferase (295 aa).

The S-adenosyl-L-methionine site is built by threonine 150, glycine 171, aspartate 193, and asparagine 232.

Belongs to the methyltransferase superfamily. PrmA family.

Its subcellular location is the cytoplasm. It carries out the reaction L-lysyl-[protein] + 3 S-adenosyl-L-methionine = N(6),N(6),N(6)-trimethyl-L-lysyl-[protein] + 3 S-adenosyl-L-homocysteine + 3 H(+). Functionally, methylates ribosomal protein L11. The protein is Ribosomal protein L11 methyltransferase of Methylobacillus flagellatus (strain ATCC 51484 / DSM 6875 / VKM B-1610 / KT).